Consider the following 429-residue polypeptide: uncharacterized protein (429 aa).

Basic and acidic residues predominate over residues 1–12; sequence MSDSKEDIRNGQ. 3 disordered regions span residues 1 to 63, 257 to 306, and 320 to 429; these read MSDS…APEA, RSRA…SDRM, and YRGY…SDSE. The span at 328–362 shows a compositional bias: acidic residues; sequence EENEEDDLGDFIAEEEEEEEQEEEQEEDEEDEEEV. A compositionally biased stretch (basic and acidic residues) spans 369–378; it reads KGFDADKEAS.

The protein belongs to the LEO1 family.

Its subcellular location is the nucleus. This is an uncharacterized protein from Schizosaccharomyces pombe (strain 972 / ATCC 24843) (Fission yeast).